Consider the following 197-residue polypeptide: MKVWSKRNVQRGNRKRWVGATGSLSARLAAAGQRFSVQVLSQGLQALDPDEASALGLSRLKVGYVREVLLRVDEVAVVFARSVTAHPHSQGPWRSIRGLGTRPLADVLFGQHGIARTPLQFASLQVASSLHRHVAHAWLGATGAALASRVLPARRSVFTRGAAPLLVMEVFAAPHAPWGWLTTKTRRGPPALPRTKP.

Substrate contacts are provided by Arg66, Leu104, and Glu169.

Belongs to the UbiC family.

It is found in the cytoplasm. It catalyses the reaction chorismate = 4-hydroxybenzoate + pyruvate. It functions in the pathway cofactor biosynthesis; ubiquinone biosynthesis. Its function is as follows. Removes the pyruvyl group from chorismate, with concomitant aromatization of the ring, to provide 4-hydroxybenzoate (4HB) for the ubiquinone pathway. In Albidiferax ferrireducens (strain ATCC BAA-621 / DSM 15236 / T118) (Rhodoferax ferrireducens), this protein is Probable chorismate pyruvate-lyase.